The sequence spans 419 residues: Divergent protein kinase domain 1C (419 aa).

At 1–22 (MARAAGARGPAGWCRRRGRCGR) the chain is on the cytoplasmic side. The short motif at 16–17 (RR) is the May mediate ER retention element. A helical membrane pass occupies residues 23 to 43 (GTLLAFAAWTAGWVLAAALLL). The Lumenal segment spans residues 44–419 (RAHPGVLSER…TLRELQEAEK (376 aa)).

Belongs to the DIPK family. In terms of processing, among the many cysteines in the lumenal domain, most are probably involved in disulfide bonds.

The protein localises to the endoplasmic reticulum membrane. The sequence is that of Divergent protein kinase domain 1C from Homo sapiens (Human).